Reading from the N-terminus, the 312-residue chain is uncharacterized protein (312 aa).

Residues 1–28 form the signal peptide; sequence MNSADTQEPKSFNHTDMWTAFGTTMSGA.

Its function is as follows. The FAS-operon encodes genes involved in cytokinin production and in host plant fasciation (leafy gall). This is an uncharacterized protein from Rhodococcoides fascians (Rhodococcus fascians).